The chain runs to 500 residues: Probable trehalose-phosphate phosphatase 8 (500 aa).

The protein belongs to the trehalose phosphatase family. A divalent metal cation serves as cofactor.

It carries out the reaction alpha,alpha-trehalose 6-phosphate + H2O = alpha,alpha-trehalose + phosphate. It functions in the pathway glycan biosynthesis; trehalose biosynthesis. Functionally, removes the phosphate from trehalose 6-phosphate to produce free trehalose. Trehalose accumulation in plant may improve abiotic stress tolerance. This chain is Probable trehalose-phosphate phosphatase 8 (TPP8), found in Oryza sativa subsp. japonica (Rice).